A 381-amino-acid chain; its full sequence is Acetylornithine deacetylase (381 aa).

Zn(2+) is bound at residue histidine 79. Aspartate 81 is a catalytic residue. Residue aspartate 111 participates in Zn(2+) binding. Glutamate 143 is an active-site residue. Zn(2+)-binding residues include glutamate 144, glutamate 168, and histidine 354.

Belongs to the peptidase M20A family. ArgE subfamily. As to quaternary structure, homodimer. Zn(2+) serves as cofactor. Co(2+) is required as a cofactor. It depends on glutathione as a cofactor.

It is found in the cytoplasm. It carries out the reaction N(2)-acetyl-L-ornithine + H2O = L-ornithine + acetate. The protein operates within amino-acid biosynthesis; L-arginine biosynthesis; L-ornithine from N(2)-acetyl-L-ornithine (linear): step 1/1. Catalyzes the hydrolysis of the amide bond of N(2)-acetylated L-amino acids. Cleaves the acetyl group from N-acetyl-L-ornithine to form L-ornithine, an intermediate in L-arginine biosynthesis pathway, and a branchpoint in the synthesis of polyamines. The polypeptide is Acetylornithine deacetylase (Buchnera aphidicola subsp. Acyrthosiphon pisum (strain 5A)).